The primary structure comprises 179 residues: Large ribosomal subunit protein uL5 (179 aa).

Belongs to the universal ribosomal protein uL5 family. As to quaternary structure, part of the 50S ribosomal subunit; part of the 5S rRNA/L5/L18/L25 subcomplex. Contacts the 5S rRNA and the P site tRNA. Forms a bridge to the 30S subunit in the 70S ribosome.

In terms of biological role, this is one of the proteins that bind and probably mediate the attachment of the 5S RNA into the large ribosomal subunit, where it forms part of the central protuberance. In the 70S ribosome it contacts protein S13 of the 30S subunit (bridge B1b), connecting the 2 subunits; this bridge is implicated in subunit movement. Contacts the P site tRNA; the 5S rRNA and some of its associated proteins might help stabilize positioning of ribosome-bound tRNAs. The sequence is that of Large ribosomal subunit protein uL5 from Nitrosospira multiformis (strain ATCC 25196 / NCIMB 11849 / C 71).